The sequence spans 103 residues: Non-histone chromosomal protein HMG-14B (103 aa).

The segment at 1–103 (MPKRKVAASR…AVEKEEVKSE (103 aa)) is disordered. The segment covering 29-50 (VPDKAEPKAKALAAKDKSENKK) has biased composition (basic and acidic residues). The segment covering 51-60 (AQSKGKKGPK) has biased composition (basic residues). Residues 94–103 (AVEKEEVKSE) show a composition bias toward basic and acidic residues.

Belongs to the HMGN family.

The protein resides in the nucleus. In terms of biological role, binds to the inner side of the nucleosomal DNA thus altering the interaction between the DNA and the histone octamer. May be involved in the process which maintains transcribable genes in a unique chromatin conformation. The protein is Non-histone chromosomal protein HMG-14B (HMG14) of Gallus gallus (Chicken).